Here is a 227-residue protein sequence, read N- to C-terminus: uncharacterized protein (227 aa).

A coiled-coil region spans residues N52–N100.

Belongs to the mimivirus L246/L426 family.

This is an uncharacterized protein from Acanthamoeba polyphaga mimivirus (APMV).